We begin with the raw amino-acid sequence, 264 residues long: Probable transcriptional regulatory protein PPA1157 (264 aa).

Belongs to the TACO1 family.

It is found in the cytoplasm. The chain is Probable transcriptional regulatory protein PPA1157 from Cutibacterium acnes (strain DSM 16379 / KPA171202) (Propionibacterium acnes).